The sequence spans 1596 residues: Cellulose synthase 2 (1596 aa).

Residues 1–749 are catalytic; the sequence is MIYRAILKRL…RSARHGATAS (749 aa). A run of 2 helical transmembrane segments spans residues 25 to 45 and 106 to 126; these read SPFV…GVTI and LSLL…LSYF. Residues 145–238 form a catalytic subdomain A region; that stretch reads DWPVVDVYVP…YVVIFDCDHI (94 aa). Residue aspartate 187 is part of the active site. 2 residues coordinate substrate: aspartate 234 and aspartate 236. A catalytic subdomain B region spans residues 315 to 375; it reads SAVLGIGGFA…GQRVRWARGM (61 aa). Aspartate 331 is a catalytic residue. Transmembrane regions (helical) follow at residues 396–416, 421–441, 505–525, and 544–564; these read LCYL…VFLA, FLFL…VYAF, FDLN…LALV, and FALN…SIAV. The PilZ domain maps to 570 to 669; that stretch reads QIRHKPRVRA…ERQIVEFMFG (100 aa). The cyclic di-GMP binding domain stretch occupies residues 750–1596; the sequence is LIVLLGLPAA…RVKDTTDASH (847 aa). Disordered stretches follow at residues 769-812 and 828-868; these read SRAT…IAPA and TGPA…APPI. Residues 783-809 show a composition bias toward pro residues; sequence VEPPPVNAPPPPSLPQPPGTLPTPPQI. The helical transmembrane segment at 1553 to 1573 threads the bilayer; it reads LTLYVLGLVGAGLVAAAAVRL.

The protein in the N-terminal section; belongs to the glycosyltransferase 2 family. In the C-terminal section; belongs to the AcsB/BcsB family.

Its subcellular location is the cell inner membrane. It catalyses the reaction [(1-&gt;4)-beta-D-glucosyl](n) + UDP-alpha-D-glucose = [(1-&gt;4)-beta-D-glucosyl](n+1) + UDP + H(+). This chain is Cellulose synthase 2 (acsAII), found in Novacetimonas hansenii (Komagataeibacter hansenii).